We begin with the raw amino-acid sequence, 611 residues long: Alkyldihydroxyacetonephosphate synthase (611 aa).

The 181-residue stretch at 137–317 (VKNAPDLIVL…TEAVMKVHAV (181 aa)) folds into the FAD-binding PCMH-type domain. Residues 169–175 (PMGGGSN), 237–243 (DSFEFST), 250–255 (TCSSGH), and 301–307 (EGTLGII) contribute to the FAD site. Residue Arg-447 participates in substrate binding. Tyr-508 serves as the catalytic Proton donor/acceptor. The tract at residues 544-546 (HHH) is important for enzyme activity. The short motif at 609–611 (PKL) is the Microbody targeting signal element.

Belongs to the FAD-binding oxidoreductase/transferase type 4 family. In terms of assembly, homodimer. FAD is required as a cofactor.

It is found in the peroxisome. The enzyme catalyses a long chain fatty alcohol + a 1-acylglycerone 3-phosphate = a 1-O-alkylglycerone 3-phosphate + a long-chain fatty acid + H(+). The protein operates within glycerolipid metabolism; ether lipid biosynthesis. Catalyzes the exchange of an acyl for a long-chain alkyl group and the formation of the ether bond in the biosynthesis of ether phospholipids. The sequence is that of Alkyldihydroxyacetonephosphate synthase (eapA) from Dictyostelium discoideum (Social amoeba).